Here is a 267-residue protein sequence, read N- to C-terminus: Ubiquinone biosynthesis protein COQ4, mitochondrial (267 aa).

The transit peptide at 1 to 17 (MSRLKIPSQLLRGGRGF) directs the protein to the mitochondrion. Residues histidine 153, aspartate 154, histidine 157, and glutamate 169 each coordinate Zn(2+).

The protein belongs to the COQ4 family. In terms of assembly, component of a multi-subunit COQ enzyme complex, composed of at least COQ3, COQ4, COQ5, COQ6, COQ7 and COQ9. It depends on Zn(2+) as a cofactor.

It is found in the mitochondrion inner membrane. The enzyme catalyses a 4-hydroxy-3-methoxy-5-(all-trans-polyprenyl)benzoate + H(+) = a 2-methoxy-6-(all-trans-polyprenyl)phenol + CO2. It participates in cofactor biosynthesis; ubiquinone biosynthesis. Its function is as follows. Lyase that catalyzes the C1-decarboxylation of 4-hydroxy-3-methoxy-5-(all-trans-polyprenyl)benzoic acid into 2-methoxy-6-(all-trans-polyprenyl)phenol during ubiquinone biosynthesis. The chain is Ubiquinone biosynthesis protein COQ4, mitochondrial from Arthroderma otae (strain ATCC MYA-4605 / CBS 113480) (Microsporum canis).